A 220-amino-acid chain; its full sequence is Putative GED domain-containing protein DNM1P46 (220 aa).

Residues 18–46 are disordered; it reads VSVETRNVKPQGKDSKAEENGSHSFMHSM. Over residues 28 to 38 the composition is skewed to basic and acidic residues; it reads QGKDSKAEENG. One can recognise a GED domain in the interval 54-149; it reads METTQNLVDS…CCPTCTRLGT (96 aa). The segment at 173–194 is disordered; it reads DTPGGVGRAGTAARRDSRGNEK. A compositionally biased stretch (basic and acidic residues) spans 185 to 194; that stretch reads ARRDSRGNEK.

The protein is Putative GED domain-containing protein DNM1P46 (DNM1P46) of Homo sapiens (Human).